Consider the following 524-residue polypeptide: MSQGSPGAWAPLDPTSGSSASPNPFVHELHLSGLQRVKFCLLGVLLAPIRVLLAFIVLFLLWPFAWLQVAGLTEEQLQEPITGWRKTVCHNGVLGLSRLLFFLLGFLRIRVRGQRASRLEAPVLVAAPHSTFFDPIVLLPCDLPKVVSRAENLSVPVIGALLRFNQAILVSRHDPASRRRVVEEVRRRATSGGKWPQVLFFPEGTCSNKKALLKFKPGAFIAGVPVQPVLIRYPNSLDTTSWAWRGPGVLKVLWLTASQPCSIVDVEFLPVYQPSLEESKDPTLYANNVQRVMAQALGIPATECEFVGSLPVIVVGQLKVALEPQLWELAKVLQKAGLSPGFVDMGAEPGRSRMISQEAFAQQLQLSDPQTVAGAFSYFQQDAKGLVDFRNVALALAALDGGRSLEELTRLAFELFAEEQAEGSDRLLYKDGFSTILHLLLGSPRPAATTLHAELCQPGCSQGLSLCQFQNFSLHDPLYGKLFSAYLRPPHKPRSTSQIPNASSPSSPTALANGTVQAPKQKGD.

Helical transmembrane passes span 40-62 (CLLG…FLLW) and 87-107 (TVCH…LGFL). Residues 129–134 (HSTFFD) carry the HXXXXD motif motif. N-linked (GlcNAc...) asparagine glycosylation is present at asparagine 152. A disordered region spans residues 490-524 (PHKPRSTSQIPNASSPSSPTALANGTVQAPKQKGD). The span at 495-518 (STSQIPNASSPSSPTALANGTVQA) shows a compositional bias: polar residues.

The protein belongs to the 1-acyl-sn-glycerol-3-phosphate acyltransferase family. Widely expressed with much higher level in brain. Expressed in erythroleukemic cells but not in reticulocytes.

It localises to the endoplasmic reticulum membrane. The catalysed reaction is a 1-acyl-sn-glycero-3-phosphoethanolamine + an acyl-CoA = a 1,2-diacyl-sn-glycero-3-phosphoethanolamine + CoA. It catalyses the reaction a 1-O-(1Z-alkenyl)-sn-glycero-3-phosphoethanolamine + an acyl-CoA = a 1-O-(1Z-alkenyl)-2-acyl-sn-glycero-3-phosphoethanolamine + CoA. The enzyme catalyses a 1-acyl-sn-glycero-3-phosphocholine + an acyl-CoA = a 1,2-diacyl-sn-glycero-3-phosphocholine + CoA. It carries out the reaction a 1-O-alkyl-sn-glycero-3-phosphocholine + acetyl-CoA = a 1-O-alkyl-2-acetyl-sn-glycero-3-phosphocholine + CoA. The catalysed reaction is a 1-acyl-sn-glycero-3-phospho-L-serine + an acyl-CoA = a 1,2-diacyl-sn-glycero-3-phospho-L-serine + CoA. It catalyses the reaction octanoyl-CoA + a 1-acyl-sn-glycero-3-phosphoethanolamine = 1-acyl-2-octanoyl-sn-glycero-3-phosphoethanolamine + CoA. The enzyme catalyses a 1-acyl-sn-glycero-3-phosphoethanolamine + hexadecanoyl-CoA = 1-acyl-2-hexadecanoyl-sn-glycero-3-phosphoethanolamine + CoA. It carries out the reaction a 1-acyl-sn-glycero-3-phosphoethanolamine + octadecanoyl-CoA = 1-acyl-2-octadecanoyl-sn-glycero-3-phosphoethanolamine + CoA. The catalysed reaction is a 1-acyl-sn-glycero-3-phosphoethanolamine + (9Z)-octadecenoyl-CoA = 1-acyl-2-(9Z)-octadecenoyl-sn-glycero-3-phosphoethanolamine + CoA. It catalyses the reaction a 1-acyl-sn-glycero-3-phosphoethanolamine + (5Z,8Z,11Z,14Z)-eicosatetraenoyl-CoA = 1-acyl-2-(5Z,8Z,11Z,14Z)-eicosatetraenoyl-sn-glycero-3-phosphoethanolamine + CoA. The enzyme catalyses a 1-O-(1Z-alkenyl)-sn-glycero-3-phosphoethanolamine + octanoyl-CoA = 1-O-(1Z)-alkenyl-2-octanoyl-sn-glycero-3-phosphoethanolamine + CoA. It carries out the reaction a 1-O-(1Z-alkenyl)-sn-glycero-3-phosphoethanolamine + hexadecanoyl-CoA = 1-O-(1Z)-alkenyl-2-hexadecanoyl-sn-glycero-3-phosphoethanolamine + CoA. The catalysed reaction is a 1-O-(1Z-alkenyl)-sn-glycero-3-phosphoethanolamine + octadecanoyl-CoA = 1-O-(1Z)-alkenyl-2-octadecanoyl-sn-glycero-3-phosphoethanolamine + CoA. It catalyses the reaction a 1-O-(1Z-alkenyl)-sn-glycero-3-phosphoethanolamine + (9Z)-octadecenoyl-CoA = 1-O-(1Z)-alkenyl-2-(9Z)-octadecenoyl-sn-glycero-3-phosphoethanolamine + CoA. The enzyme catalyses a 1-O-(1Z-alkenyl)-sn-glycero-3-phosphoethanolamine + (5Z,8Z,11Z,14Z)-eicosatetraenoyl-CoA = 1-O-(1Z)-alkenyl-2-(5Z,8Z,11Z,14Z)-eicosatetraenoyl-sn-glycero-3-phosphoethanolamine + CoA. It carries out the reaction a 1-acyl-sn-glycero-3-phosphocholine + hexadecanoyl-CoA = 1-acyl-2-hexadecanoyl-sn-glycero-3-phosphocholine + CoA. The catalysed reaction is a 1-acyl-sn-glycero-3-phosphocholine + (9Z)-octadecenoyl-CoA = a 1-acyl-2-(9Z)-octadecenoyl-sn-glycero-3-phosphocholine + CoA. It catalyses the reaction 1-O-hexadecyl-sn-glycero-3-phosphocholine + (9Z)-octadecenoyl-CoA = 1-O-hexadecyl-2-(9Z)-octadecenoyl-sn-glycero-3-phosphocholine + CoA. The enzyme catalyses 1-O-hexadecyl-sn-glycero-3-phosphocholine + (5Z,8Z,11Z,14Z)-eicosatetraenoyl-CoA = 1-O-hexadecyl-2-(5Z,8Z,11Z,14Z)-eicosatetraenoyl-sn-glycero-3-phosphocholine + CoA. It carries out the reaction 1-hexadecanoyl-sn-glycero-3-phospho-L-serine + (9Z)-octadecenoyl-CoA = 1-hexadecanoyl-2-(9Z-octadecenoyl)-sn-glycero-3-phospho-L-serine + CoA. The catalysed reaction is 1-octadecanoyl-sn-glycero-3-phospho-(1'-sn-glycerol) + (9Z)-octadecenoyl-CoA = 1-octadecanoyl-2-(9Z-octadecenoyl)-sn-glycero-3-phospho-(1'-sn-glycerol) + CoA. It catalyses the reaction 1-octadecanoyl-sn-glycero-3-phospho-(1'-sn-glycerol) + (5Z,8Z,11Z,14Z)-eicosatetraenoyl-CoA = 1-octadecanoyl-2-(5Z,8Z,11Z,14Z-eicosatetraenoyl)-sn-glycero-3-phospho-(1'-sn-glycerol) + CoA. The protein operates within lipid metabolism; phospholipid metabolism. Displays acyl-CoA-dependent lysophospholipid acyltransferase activity with a subset of lysophospholipids as substrates; converts lysophosphatidylethanolamine to phosphatidylethanolamine, 1-alkenyl-lysophatidylethanolamine to 1-alkenyl-phosphatidylethanolamine, lysophosphatidylglycerol and alkyl-lysophosphatidylcholine to phosphatidylglycerol and alkyl-phosphatidylcholine, respectively. In contrast, has no lysophosphatidylinositol, glycerol-3-phosphate, diacylglycerol or lysophosphatidic acid acyltransferase activity. Prefers long chain acyl-CoAs (C16, C18) as acyl donors. Converts lysophosphatidylcholine to phosphatidycholine. The polypeptide is Lysophospholipid acyltransferase LPCAT4 (Lpcat4) (Mus musculus (Mouse)).